The sequence spans 364 residues: Valine dehydrogenase (364 aa).

K91 is an active-site residue. 191–197 contributes to the NAD(+) binding site; that stretch reads GVGKVGH.

This sequence belongs to the Glu/Leu/Phe/Val dehydrogenases family. As to quaternary structure, homodimer.

It localises to the cytoplasm. The catalysed reaction is L-valine + NAD(+) + H2O = 3-methyl-2-oxobutanoate + NH4(+) + NADH + H(+). The protein operates within amino-acid degradation; L-valine degradation. With respect to regulation, repressed in minimal medium by the presence of glucose and NH4(+), glycerol and NH4(+), or glycerol and asparagine. Functionally, oxidative deamination of branched-chain amino acids. Oxidizes L-valine and L-alpha-aminobutyric acid efficiently, and L-isoleucine and L-leucine less efficiently. Does not act on D-valine. The catabolism of L-valine is the major source of fatty acid precursors for macrolide biosynthesis and a vital source of antibiotic precursors. Uses NAD; no activity was found with NADP. The protein is Valine dehydrogenase (vdh) of Streptomyces coelicolor (strain ATCC BAA-471 / A3(2) / M145).